A 240-amino-acid chain; its full sequence is MSTLFIADLHLSVQEPAITAGFLHFIQREAIHADALYILGDLFESWIGDDDPEPLYRQVAAALKSLQQQGVPCYFIHGNRDFLLGKRFAEESGMVLLPEENVVELYGRKILILHGDTLCTDDTDYQHFRKKVHNPLIQKLFLWIPLRLRLRIAAYMRNKSQQNNSGKSERIMDVNSKAVIDAFLRHDVSWMIHGHTHRPAIHSVELPMVTAHRVVLGAWHVEGSMVKVTADNVELITFPF.

Residues D8, H10, D41, N79, and H114 each coordinate Mn(2+). N79 to R80 contacts substrate. The substrate site is built by D122, S160, N164, K167, and H195. Mn(2+) contacts are provided by H195 and H197.

It belongs to the LpxH family. The cofactor is Mn(2+).

It localises to the cell inner membrane. It catalyses the reaction UDP-2-N,3-O-bis[(3R)-3-hydroxytetradecanoyl]-alpha-D-glucosamine + H2O = 2-N,3-O-bis[(3R)-3-hydroxytetradecanoyl]-alpha-D-glucosaminyl 1-phosphate + UMP + 2 H(+). The protein operates within glycolipid biosynthesis; lipid IV(A) biosynthesis; lipid IV(A) from (3R)-3-hydroxytetradecanoyl-[acyl-carrier-protein] and UDP-N-acetyl-alpha-D-glucosamine: step 4/6. Functionally, hydrolyzes the pyrophosphate bond of UDP-2,3-diacylglucosamine to yield 2,3-diacylglucosamine 1-phosphate (lipid X) and UMP by catalyzing the attack of water at the alpha-P atom. Involved in the biosynthesis of lipid A, a phosphorylated glycolipid that anchors the lipopolysaccharide to the outer membrane of the cell. In Yersinia pestis bv. Antiqua (strain Angola), this protein is UDP-2,3-diacylglucosamine hydrolase.